A 296-amino-acid polypeptide reads, in one-letter code: Formamidopyrimidine-DNA glycosylase (296 aa).

Proline 2 (schiff-base intermediate with DNA) is an active-site residue. The Proton donor role is filled by glutamate 3. The active-site Proton donor; for beta-elimination activity is the lysine 58. DNA contacts are provided by histidine 104, arginine 126, and lysine 169. The FPG-type zinc-finger motif lies at 260 to 296; sequence SVYDRESQACRTPGCGGTVARIVQAGRSTFYCATCQK. Arginine 286 (proton donor; for delta-elimination activity) is an active-site residue.

Belongs to the FPG family. In terms of assembly, monomer. Zn(2+) is required as a cofactor.

It catalyses the reaction Hydrolysis of DNA containing ring-opened 7-methylguanine residues, releasing 2,6-diamino-4-hydroxy-5-(N-methyl)formamidopyrimidine.. The catalysed reaction is 2'-deoxyribonucleotide-(2'-deoxyribose 5'-phosphate)-2'-deoxyribonucleotide-DNA = a 3'-end 2'-deoxyribonucleotide-(2,3-dehydro-2,3-deoxyribose 5'-phosphate)-DNA + a 5'-end 5'-phospho-2'-deoxyribonucleoside-DNA + H(+). Its function is as follows. Involved in base excision repair of DNA damaged by oxidation or by mutagenic agents. Acts as a DNA glycosylase that recognizes and removes damaged bases. Has a preference for oxidized purines, such as 7,8-dihydro-8-oxoguanine (8-oxoG). Has AP (apurinic/apyrimidinic) lyase activity and introduces nicks in the DNA strand. Cleaves the DNA backbone by beta-delta elimination to generate a single-strand break at the site of the removed base with both 3'- and 5'-phosphates. This chain is Formamidopyrimidine-DNA glycosylase, found in Rhizobium johnstonii (strain DSM 114642 / LMG 32736 / 3841) (Rhizobium leguminosarum bv. viciae).